Consider the following 505-residue polypeptide: uncharacterized protein (505 aa).

A helical transmembrane segment spans residues 11–27 (IGIIGGGIVGWLAAIAL).

The protein localises to the membrane. This is an uncharacterized protein from Sinorhizobium fredii (strain NBRC 101917 / NGR234).